A 356-amino-acid polypeptide reads, in one-letter code: Holliday junction branch migration complex subunit RuvB (356 aa).

The interval 4 to 192 (DDTTDATADE…FGFTAHMEFY (189 aa)) is large ATPase domain (RuvB-L). Residues Leu-31, Arg-32, Gly-73, Lys-76, Thr-77, Thr-78, 139-141 (EDF), Arg-182, Tyr-192, and Arg-229 each bind ATP. Thr-77 is a binding site for Mg(2+). Residues 193 to 263 (EPHELERVIH…IAAAALKVYE (71 aa)) form a small ATPAse domain (RuvB-S) region. The segment at 266–356 (ARGLDRLDRG…GNGQGDLFGA (91 aa)) is head domain (RuvB-H). DNA-binding residues include Arg-302, Arg-321, and Arg-326.

This sequence belongs to the RuvB family. As to quaternary structure, homohexamer. Forms an RuvA(8)-RuvB(12)-Holliday junction (HJ) complex. HJ DNA is sandwiched between 2 RuvA tetramers; dsDNA enters through RuvA and exits via RuvB. An RuvB hexamer assembles on each DNA strand where it exits the tetramer. Each RuvB hexamer is contacted by two RuvA subunits (via domain III) on 2 adjacent RuvB subunits; this complex drives branch migration. In the full resolvosome a probable DNA-RuvA(4)-RuvB(12)-RuvC(2) complex forms which resolves the HJ.

The protein localises to the cytoplasm. The enzyme catalyses ATP + H2O = ADP + phosphate + H(+). Functionally, the RuvA-RuvB-RuvC complex processes Holliday junction (HJ) DNA during genetic recombination and DNA repair, while the RuvA-RuvB complex plays an important role in the rescue of blocked DNA replication forks via replication fork reversal (RFR). RuvA specifically binds to HJ cruciform DNA, conferring on it an open structure. The RuvB hexamer acts as an ATP-dependent pump, pulling dsDNA into and through the RuvAB complex. RuvB forms 2 homohexamers on either side of HJ DNA bound by 1 or 2 RuvA tetramers; 4 subunits per hexamer contact DNA at a time. Coordinated motions by a converter formed by DNA-disengaged RuvB subunits stimulates ATP hydrolysis and nucleotide exchange. Immobilization of the converter enables RuvB to convert the ATP-contained energy into a lever motion, pulling 2 nucleotides of DNA out of the RuvA tetramer per ATP hydrolyzed, thus driving DNA branch migration. The RuvB motors rotate together with the DNA substrate, which together with the progressing nucleotide cycle form the mechanistic basis for DNA recombination by continuous HJ branch migration. Branch migration allows RuvC to scan DNA until it finds its consensus sequence, where it cleaves and resolves cruciform DNA. This chain is Holliday junction branch migration complex subunit RuvB, found in Streptomyces avermitilis (strain ATCC 31267 / DSM 46492 / JCM 5070 / NBRC 14893 / NCIMB 12804 / NRRL 8165 / MA-4680).